The following is a 611-amino-acid chain: Chaperone protein HscA (611 aa).

The protein belongs to the heat shock protein 70 family.

Chaperone involved in the maturation of iron-sulfur cluster-containing proteins. Has a low intrinsic ATPase activity which is markedly stimulated by HscB. Involved in the maturation of IscU. In Buchnera aphidicola subsp. Acyrthosiphon pisum (strain 5A), this protein is Chaperone protein HscA.